A 729-amino-acid polypeptide reads, in one-letter code: Neurochondrin (729 aa).

Ser-2 carries the N-acetylserine modification. Ser-2 is subject to Phosphoserine. Residues Cys-3 and Cys-4 are each lipidated (S-palmitoyl cysteine). Position 75 is an asymmetric dimethylarginine (Arg-75). Ser-448 carries the phosphoserine modification.

It belongs to the neurochondrin family. Interacts with MCHR1. Interacts with SEMA4C. Interacts with DIAPH1 (via FH3 domain). Interacts with GRM5. Palmitoylated. Palmitoylation by ZDHHC1, ZDHHC3 and ZDHHC11 regulates the association of NCDN with endosome membranes. May also be palmitoylated by ZDHHC7. Expressed in brain and in peripheral nervous system (at protein level). Weakly expressed in neurites.

The protein resides in the cytoplasm. The protein localises to the cytosol. It is found in the endosome membrane. It localises to the cell projection. Its subcellular location is the dendrite. The protein resides in the postsynapse. Functionally, probably involved in signal transduction, in the nervous system, via increasing cell surface localization of GRM5 and positively regulating its signaling. Required for the spatial learning process. Acts as a negative regulator of Ca(2+)-calmodulin-dependent protein kinase 2 (CaMK2) phosphorylation. May play a role in modulating melanin-concentrating hormone-mediated functions via its interaction with MCHR1 that interferes with G protein-coupled signal transduction. May be involved in bone metabolism. May also be involved in neurite outgrowth. The sequence is that of Neurochondrin (Ncdn) from Rattus norvegicus (Rat).